A 389-amino-acid chain; its full sequence is Succinate--CoA ligase [ADP-forming] subunit beta (389 aa).

Positions 9 to 236 (RDMFEAHGVP…KDAADPLEAK (228 aa)) constitute an ATP-grasp domain. ATP is bound by residues K45, 52–54 (GRG), A94, and E99. N191 and D205 together coordinate Mg(2+). Residues N256 and 318-320 (GIT) each bind substrate.

This sequence belongs to the succinate/malate CoA ligase beta subunit family. As to quaternary structure, heterotetramer of two alpha and two beta subunits. Mg(2+) serves as cofactor.

The catalysed reaction is succinate + ATP + CoA = succinyl-CoA + ADP + phosphate. The enzyme catalyses GTP + succinate + CoA = succinyl-CoA + GDP + phosphate. Its pathway is carbohydrate metabolism; tricarboxylic acid cycle; succinate from succinyl-CoA (ligase route): step 1/1. Its function is as follows. Succinyl-CoA synthetase functions in the citric acid cycle (TCA), coupling the hydrolysis of succinyl-CoA to the synthesis of either ATP or GTP and thus represents the only step of substrate-level phosphorylation in the TCA. The beta subunit provides nucleotide specificity of the enzyme and binds the substrate succinate, while the binding sites for coenzyme A and phosphate are found in the alpha subunit. This is Succinate--CoA ligase [ADP-forming] subunit beta from Arthrobacter sp. (strain FB24).